The following is a 159-amino-acid chain: SsrA-binding protein (159 aa).

It belongs to the SmpB family.

Its subcellular location is the cytoplasm. Its function is as follows. Required for rescue of stalled ribosomes mediated by trans-translation. Binds to transfer-messenger RNA (tmRNA), required for stable association of tmRNA with ribosomes. tmRNA and SmpB together mimic tRNA shape, replacing the anticodon stem-loop with SmpB. tmRNA is encoded by the ssrA gene; the 2 termini fold to resemble tRNA(Ala) and it encodes a 'tag peptide', a short internal open reading frame. During trans-translation Ala-aminoacylated tmRNA acts like a tRNA, entering the A-site of stalled ribosomes, displacing the stalled mRNA. The ribosome then switches to translate the ORF on the tmRNA; the nascent peptide is terminated with the 'tag peptide' encoded by the tmRNA and targeted for degradation. The ribosome is freed to recommence translation, which seems to be the essential function of trans-translation. The chain is SsrA-binding protein from Coxiella burnetii (strain CbuG_Q212) (Coxiella burnetii (strain Q212)).